We begin with the raw amino-acid sequence, 471 residues long: MKVKTRFAPSPTGFLHVGGARTALYSWLFAKSQGGEFVLRIEDTDLERSTQEAIDAIIEGMEWLELNWDEGPYYQTKRFDRYNGIIDEMLTDGRAYKCYCSRERLDALREGQMASGEKPRYDGKCRDSAHDHPADAPHVIRFRNPTEGSVVFDDHVRGRIEFANTELDDLIIRRTDGAPTYNFCVVVDDWDMEITHVVRGEDHINNTPRQINIYKALNAPVPEFAHVSMILGDDGAKLSKRHGAVSVMQYRDDGYLPEALLNYLVRLGWSHGDQEIFTLDEMIKLFSLDAISKSASAFNTDKLLWLNNHYMRSLDPAYVAKHLAWHMENQKIDTSKGPSLPEVVTLLAERCNTLVEMAAQSRYLFEDFEAIDEAAAKKHLRGVAAEPLALAKAKLTALDTWTTEALHELIEATAAELGQGMGKVGMPLRVAVTGLGQSPGIDAVMALVGKERVLARIDRALAYIEARMAAE.

A 'HIGH' region motif is present at residues 9 to 19 (PSPTGFLHVGG). Zn(2+) contacts are provided by cysteine 98, cysteine 100, cysteine 125, and aspartate 127. The short motif at 237–241 (KLSKR) is the 'KMSKS' region element. Lysine 240 lines the ATP pocket.

This sequence belongs to the class-I aminoacyl-tRNA synthetase family. Glutamate--tRNA ligase type 1 subfamily. As to quaternary structure, monomer. The cofactor is Zn(2+).

It localises to the cytoplasm. It carries out the reaction tRNA(Glu) + L-glutamate + ATP = L-glutamyl-tRNA(Glu) + AMP + diphosphate. Its function is as follows. Catalyzes the attachment of glutamate to tRNA(Glu) in a two-step reaction: glutamate is first activated by ATP to form Glu-AMP and then transferred to the acceptor end of tRNA(Glu). This is Glutamate--tRNA ligase from Aeromonas salmonicida (strain A449).